Reading from the N-terminus, the 411-residue chain is LIM domain-binding protein 1 (411 aa).

S2 carries the N-acetylserine modification. T61 is modified (phosphothreonine). Phosphoserine occurs at positions 265 and 302. 2 disordered regions span residues 284–330 (PPAE…TFAL) and 367–411 (DAAN…QASQ). A compositionally biased stretch (low complexity) spans 302–318 (SGGSTMSSGGGNTNNSN). The region spanning 336–375 (DVMVVGEPTLMGGEFGDEDERLITRLENTQFDAANGIDDE) is the LIM interaction domain (LID) domain.

It belongs to the LDB family. As to quaternary structure, interacts with ESR1. Forms homodimers and heterodimers. Interacts with and activates LHX1/LIM1. Interacts with the LIM domains of ISL1 and LMO2. Can assemble in a complex with LMO2 and TAL1/SCL but does not interact with TAL1/SCL directly. Strongly interacts with the LIM2 domain of LMX1A and more weakly with the LIM1 domain. Homodimerization is not required for, and does not effect, LMX1A-binding. Component of a nuclear TAL-1 complex composed at least of CBFA2T3, LDB1, TAL1 and TCF3. Interacts with LHX6 and LHX9. At neuronal promoters, forms a complex with LHX3 involved in the specification of interneurons, in motor neurons, it is displaced by ISL1 to form a ternary complex in which ISL1 contacts both LHX3 and LDB1. Interacts with SLK; leading to negatively regulate SLK kinase activity. Interacts with YWHAZ. Interacts with PRDM1/BLIMP1. Interacts with LMO4. Interacts with RLIM/RNF12; the interaction inhibits the ubiquitination of LMO proteins. Post-translationally, ubiquitinated by RLIM/RNF12, leading to its degradation by the proteasome. As to expression, expressed in multiple adult tissues including heart, brain, liver, kidney, testis, lung and muscle, with expression highest in the pituitary gland and skin.

It localises to the nucleus. Binds to the LIM domain of a wide variety of LIM domain-containing transcription factors. May regulate the transcriptional activity of LIM-containing proteins by determining specific partner interactions. Plays a role in the development of interneurons and motor neurons in cooperation with LHX3 and ISL1. Acts synergistically with LHX1/LIM1 in axis formation and activation of gene expression. Acts with LMO2 in the regulation of red blood cell development, maintaining erythroid precursors in an immature state. The sequence is that of LIM domain-binding protein 1 (Ldb1) from Mus musculus (Mouse).